Reading from the N-terminus, the 147-residue chain is D-aminoacyl-tRNA deacylase (147 aa).

The Gly-cisPro motif, important for rejection of L-amino acids signature appears at 137–138 (GP).

This sequence belongs to the DTD family. As to quaternary structure, homodimer.

It localises to the cytoplasm. The enzyme catalyses glycyl-tRNA(Ala) + H2O = tRNA(Ala) + glycine + H(+). It catalyses the reaction a D-aminoacyl-tRNA + H2O = a tRNA + a D-alpha-amino acid + H(+). Functionally, an aminoacyl-tRNA editing enzyme that deacylates mischarged D-aminoacyl-tRNAs. Also deacylates mischarged glycyl-tRNA(Ala), protecting cells against glycine mischarging by AlaRS. Acts via tRNA-based rather than protein-based catalysis; rejects L-amino acids rather than detecting D-amino acids in the active site. By recycling D-aminoacyl-tRNA to D-amino acids and free tRNA molecules, this enzyme counteracts the toxicity associated with the formation of D-aminoacyl-tRNA entities in vivo and helps enforce protein L-homochirality. This Acinetobacter baumannii (strain AYE) protein is D-aminoacyl-tRNA deacylase.